The chain runs to 1435 residues: Dicer-like protein 2 (1435 aa).

One can recognise a Helicase ATP-binding domain in the interval 54–234; sequence MLSESLRQNI…LEVLEINLNA (181 aa). 67–74 provides a ligand contact to ATP; sequence MDTGSGKT. The DEAH box motif lies at 175–178; the sequence is DEAH. The Helicase C-terminal domain maps to 400–564; it reads KLIDFLVLEH…ENKRALEHIQ (165 aa). Residues 591–684 enclose the Dicer dsRNA-binding fold domain; sequence ARNHLSHFCG…MPAHHHIDDE (94 aa). RNase III domains are found at residues 956–1099 and 1141–1323; these read ANEL…IDGG and LSEI…IDSQ. Residues E1178, D1309, and E1312 each coordinate Mg(2+).

It belongs to the helicase family. Dicer subfamily. The cofactor is Mg(2+). Mn(2+) is required as a cofactor.

Functionally, dicer-like endonuclease involved in cleaving double-stranded RNA in the RNA interference (RNAi) pathway. Produces 21 to 25 bp dsRNAs (siRNAs) which target the selective destruction of homologous RNAs leading to sequence-specific suppression of gene expression, called post-transcriptional gene silencing (PTGS). Part of a broad host defense response against viral infection and transposons. The sequence is that of Dicer-like protein 2 (DCL2) from Coccidioides immitis (strain RS) (Valley fever fungus).